We begin with the raw amino-acid sequence, 1185 residues long: Ubiquitin carboxyl-terminal hydrolase 36 (1185 aa).

The span at 126 to 169 (TGKALSSNGHDNTNGVNGSSAATVNGNRKQTVEQSNQNSTTNPN) shows a compositional bias: polar residues. A disordered region spans residues 126–174 (TGKALSSNGHDNTNGVNGSSAATVNGNRKQTVEQSNQNSTTNPNELPKP). One can recognise a USP domain in the interval 199-509 (AGMLNVGNTC…NAYIMFYELD (311 aa)). C208 serves as the catalytic Nucleophile. The Proton acceptor role is filled by H468. A phosphoserine mark is found at S552 and S554. The span at 642–658 (ANSNKSSCNNNTLTTNS) shows a compositional bias: low complexity. 4 disordered regions span residues 642–804 (ANSN…TDAI), 818–975 (HRAT…YQSE), 1056–1122 (APTL…GSFP), and 1136–1185 (NKFK…QQQS). The segment covering 670–683 (SDEEDEDEDSDDDV) has biased composition (acidic residues). At T716 the chain carries Phosphothreonine. S726 and S728 each carry phosphoserine. 2 stretches are compositionally biased toward low complexity: residues 778 to 797 (KSNG…SNNN) and 836 to 853 (QQQQ…SLIS). S867 bears the Phosphoserine mark. T870 carries the phosphothreonine modification. S873 bears the Phosphoserine mark. A compositionally biased stretch (acidic residues) spans 891 to 920 (DDNDDDDEDADEEDDADADAEQEEYDDEVV). Polar residues-rich tracts occupy residues 924-942 (TTPS…SKPS) and 959-975 (SAKS…YQSE). A Phosphothreonine modification is found at T925. Positions 1062–1071 (EAREQRKRDA) are enriched in basic and acidic residues. Composition is skewed to low complexity over residues 1151–1161 (QQQRALQRHLA) and 1172–1185 (QSTG…QQQS).

This sequence belongs to the peptidase C19 family. In terms of assembly, interacts with atms/PAF1, but not with CycT.

It localises to the nucleus. It is found in the nucleolus. It catalyses the reaction Thiol-dependent hydrolysis of ester, thioester, amide, peptide and isopeptide bonds formed by the C-terminal Gly of ubiquitin (a 76-residue protein attached to proteins as an intracellular targeting signal).. In terms of biological role, required for maintaining multiple types of adult stem cells, including male and female germline, epithelial follicle cell and intestinal stem cells. May function as a transcriptional repressor by continually deubiquiting histone H2B at the promoters of genes critical for cellular differentiation, thereby preventing histone H3 'Lys-4' trimethylation (H3K4). Controls selective autophagy activation by ubiquitinated proteins. In Drosophila mojavensis (Fruit fly), this protein is Ubiquitin carboxyl-terminal hydrolase 36 (Usp36).